Reading from the N-terminus, the 317-residue chain is Terpene synthase 3 (317 aa).

The short motif at 96–101 (DDFYFE) is the DDxx(x)D/E motif element. Residues 223–231 (NDMVSFERE) carry the NDxxSxxxD/E motif motif.

This sequence belongs to the terpene synthase family.

Its function is as follows. Terpene synthase that converts its substrate farnesyl diphosphate (FPP) into the sesquiterpene CAS 137235-51-9 as a major product. Is also able to convert FPP into 9-epi-(E)-caryophyllene, alpha-neoclovene, beta-neoclovene, and 3 yet unidentified sesquiterpenes. The protein is Terpene synthase 3 of Dictyostelium purpureum (Slime mold).